A 324-amino-acid chain; its full sequence is tRNA U34 carboxymethyltransferase (324 aa).

Residues Lys-91, Trp-105, Lys-110, Gly-130, 152–154 (DPS), 181–182 (IE), Met-196, Tyr-200, and Arg-315 each bind carboxy-S-adenosyl-L-methionine.

Belongs to the class I-like SAM-binding methyltransferase superfamily. CmoB family. In terms of assembly, homotetramer.

It catalyses the reaction carboxy-S-adenosyl-L-methionine + 5-hydroxyuridine(34) in tRNA = 5-carboxymethoxyuridine(34) in tRNA + S-adenosyl-L-homocysteine + H(+). In terms of biological role, catalyzes carboxymethyl transfer from carboxy-S-adenosyl-L-methionine (Cx-SAM) to 5-hydroxyuridine (ho5U) to form 5-carboxymethoxyuridine (cmo5U) at position 34 in tRNAs. The sequence is that of tRNA U34 carboxymethyltransferase from Aliivibrio fischeri (strain ATCC 700601 / ES114) (Vibrio fischeri).